Here is a 612-residue protein sequence, read N- to C-terminus: Elongation factor 4 (612 aa).

Positions 12 to 194 (SRIRNFSIIA…QIVEKVPAPT (183 aa)) constitute a tr-type G domain. GTP-binding positions include 24–29 (DHGKST) and 141–144 (NKID).

The protein belongs to the TRAFAC class translation factor GTPase superfamily. Classic translation factor GTPase family. LepA subfamily.

The protein localises to the cell membrane. The catalysed reaction is GTP + H2O = GDP + phosphate + H(+). Functionally, required for accurate and efficient protein synthesis under certain stress conditions. May act as a fidelity factor of the translation reaction, by catalyzing a one-codon backward translocation of tRNAs on improperly translocated ribosomes. Back-translocation proceeds from a post-translocation (POST) complex to a pre-translocation (PRE) complex, thus giving elongation factor G a second chance to translocate the tRNAs correctly. Binds to ribosomes in a GTP-dependent manner. In Bacillus subtilis (strain 168), this protein is Elongation factor 4.